Here is a 515-residue protein sequence, read N- to C-terminus: UDP-glucosyltransferase 2 (515 aa).

A signal peptide spans 1-20 (MEFRLLILALFSVLMSTSNG). The Lumenal portion of the chain corresponds to 21–471 (AEILALFPIH…TAGAFLHWYQ (451 aa)). N51, N236, and N303 each carry an N-linked (GlcNAc...) asparagine glycan. The chain crosses the membrane as a helical span at residues 472-492 (YLLLDVITFLLVTFCAFCFIV). Residues 493 to 515 (KYICKALIHHYWSSSKSEKLKKN) lie on the Cytoplasmic side of the membrane.

It belongs to the UDP-glycosyltransferase family. Glycosylated.

The protein localises to the endoplasmic reticulum membrane. The catalysed reaction is kermesate + UDP-alpha-D-glucose = carminate + UDP + 2 H(+). The enzyme catalyses flavokermesate + UDP-alpha-D-glucose = flavokermesate 7-C-beta-D-glucoside + UDP + 2 H(+). In terms of biological role, membrane-bound UDP-glucosyltransferase (UGT) which catalyzes the C-glucosylation of kermesate and flavokermesate to produce carminate and flavokermesate 7-C-beta-D-glucoside (dcll) respectively. Carminate is used as a deterrent against insect predators. This chain is UDP-glucosyltransferase 2, found in Dactylopius coccus (Cochineal).